The chain runs to 147 residues: NAD(P)H-quinone oxidoreductase subunit N (147 aa).

Belongs to the complex I NdhN subunit family. In terms of assembly, NDH-1 can be composed of about 15 different subunits; different subcomplexes with different compositions have been identified which probably have different functions.

It localises to the cellular thylakoid membrane. The enzyme catalyses a plastoquinone + NADH + (n+1) H(+)(in) = a plastoquinol + NAD(+) + n H(+)(out). It catalyses the reaction a plastoquinone + NADPH + (n+1) H(+)(in) = a plastoquinol + NADP(+) + n H(+)(out). Functionally, NDH-1 shuttles electrons from an unknown electron donor, via FMN and iron-sulfur (Fe-S) centers, to quinones in the respiratory and/or the photosynthetic chain. The immediate electron acceptor for the enzyme in this species is believed to be plastoquinone. Couples the redox reaction to proton translocation, and thus conserves the redox energy in a proton gradient. Cyanobacterial NDH-1 also plays a role in inorganic carbon-concentration. This chain is NAD(P)H-quinone oxidoreductase subunit N, found in Synechococcus sp. (strain JA-2-3B'a(2-13)) (Cyanobacteria bacterium Yellowstone B-Prime).